The primary structure comprises 321 residues: Lipoyl synthase (321 aa).

7 residues coordinate [4Fe-4S] cluster: Cys68, Cys73, Cys79, Cys94, Cys98, Cys101, and Ser308. The Radical SAM core domain maps to 80 to 297 (FNHGTATFMI…KVIAEDLGFS (218 aa)).

It belongs to the radical SAM superfamily. Lipoyl synthase family. The cofactor is [4Fe-4S] cluster.

The protein resides in the cytoplasm. It carries out the reaction [[Fe-S] cluster scaffold protein carrying a second [4Fe-4S](2+) cluster] + N(6)-octanoyl-L-lysyl-[protein] + 2 oxidized [2Fe-2S]-[ferredoxin] + 2 S-adenosyl-L-methionine + 4 H(+) = [[Fe-S] cluster scaffold protein] + N(6)-[(R)-dihydrolipoyl]-L-lysyl-[protein] + 4 Fe(3+) + 2 hydrogen sulfide + 2 5'-deoxyadenosine + 2 L-methionine + 2 reduced [2Fe-2S]-[ferredoxin]. The protein operates within protein modification; protein lipoylation via endogenous pathway; protein N(6)-(lipoyl)lysine from octanoyl-[acyl-carrier-protein]: step 2/2. Its function is as follows. Catalyzes the radical-mediated insertion of two sulfur atoms into the C-6 and C-8 positions of the octanoyl moiety bound to the lipoyl domains of lipoate-dependent enzymes, thereby converting the octanoylated domains into lipoylated derivatives. This is Lipoyl synthase from Shewanella amazonensis (strain ATCC BAA-1098 / SB2B).